Consider the following 368-residue polypeptide: Transaldolase (368 aa).

Catalysis depends on Lys-140, which acts as the Schiff-base intermediate with substrate.

It belongs to the transaldolase family. Type 2 subfamily.

The protein resides in the cytoplasm. The enzyme catalyses D-sedoheptulose 7-phosphate + D-glyceraldehyde 3-phosphate = D-erythrose 4-phosphate + beta-D-fructose 6-phosphate. It participates in carbohydrate degradation; pentose phosphate pathway; D-glyceraldehyde 3-phosphate and beta-D-fructose 6-phosphate from D-ribose 5-phosphate and D-xylulose 5-phosphate (non-oxidative stage): step 2/3. Its function is as follows. Transaldolase is important for the balance of metabolites in the pentose-phosphate pathway. The sequence is that of Transaldolase from Kocuria rhizophila (strain ATCC 9341 / DSM 348 / NBRC 103217 / DC2201).